The following is a 317-amino-acid chain: MTEQMTVRGTLKGHSGWVTQIATTPKYPDMILSASRDKSIIMWKLTRDETNYGIPQRSLKGHSHFVSDVVISSDGQFALSGAWDGTLRLWDLTTGLTTRRFVGHTKDVLSVAFSADNRQIVSGSRDKTIKLWNTLGVCKYTIQDEGHTEWVSCVRFSPNSSNPIIVSCGWDKMVKVWNLANCKLKTNHIGHTGYLNTVTVSPDGSLCASGGKDGQAMLWDLNEGKHLYTLDSGDVINALCFSPNRYWLCAATGPSIKIWDLEGKIIVDELRQEVISTNSKAEPPQCTSLAWSADGQTLFAGYTDNLIRVWQVTIGTR.

WD repeat units follow at residues 13 to 44, 61 to 91, 103 to 133, 146 to 178, 190 to 220, 231 to 260, and 281 to 311; these read GHSGWVTQIATTPKYPDMILSASRDKSIIMWK, GHSHFVSDVVISSDGQFALSGAWDGTLRLWD, GHTKDVLSVAFSADNRQIVSGSRDKTIKLWN, GHTEWVSCVRFSPNSSNPIIVSCGWDKMVKVWN, GHTGYLNTVTVSPDGSLCASGGKDGQAMLWD, DSGDVINALCFSPNRYWLCAATGPSIKIWD, and AEPPQCTSLAWSADGQTLFAGYTDNLIRVWQ.

This sequence belongs to the WD repeat G protein beta family. Ribosomal protein RACK1 subfamily.

The protein resides in the cytoplasm. Its function is as follows. Involved in the recruitment, assembly and/or regulation of a variety of signaling molecules. Interacts with a wide variety of proteins and plays a role in many cellular processes. Required for VANGL2 membrane localization, inhibits Wnt signaling and regulates cellular polarization and oriented cell division during gastrulation. This chain is Small ribosomal subunit protein RACK1 (gnb2l1), found in Oreochromis niloticus (Nile tilapia).